Here is a 258-residue protein sequence, read N- to C-terminus: Ditrans,polycis-undecaprenyl-diphosphate synthase ((2E,6E)-farnesyl-diphosphate specific) (258 aa).

The active site involves Asp24. Asp24 serves as a coordination point for Mg(2+). Substrate-binding positions include 25 to 28 (GNGR), Trp29, Arg37, His41, and 69 to 71 (SSE). Asn72 functions as the Proton acceptor in the catalytic mechanism. Residues Trp73, Arg75, Arg192, and 198–200 (RIS) contribute to the substrate site. Glu211 serves as a coordination point for Mg(2+).

This sequence belongs to the UPP synthase family. As to quaternary structure, homodimer. Mg(2+) is required as a cofactor.

The enzyme catalyses 8 isopentenyl diphosphate + (2E,6E)-farnesyl diphosphate = di-trans,octa-cis-undecaprenyl diphosphate + 8 diphosphate. Catalyzes the sequential condensation of isopentenyl diphosphate (IPP) with (2E,6E)-farnesyl diphosphate (E,E-FPP) to yield (2Z,6Z,10Z,14Z,18Z,22Z,26Z,30Z,34E,38E)-undecaprenyl diphosphate (di-trans,octa-cis-UPP). UPP is the precursor of glycosyl carrier lipid in the biosynthesis of bacterial cell wall polysaccharide components such as peptidoglycan and lipopolysaccharide. The protein is Ditrans,polycis-undecaprenyl-diphosphate synthase ((2E,6E)-farnesyl-diphosphate specific) of Xanthomonas campestris pv. campestris (strain ATCC 33913 / DSM 3586 / NCPPB 528 / LMG 568 / P 25).